The sequence spans 226 residues: Lipoprotein signal peptidase (226 aa).

A run of 3 helical transmembrane segments spans residues 12–32, 69–89, and 103–123; these read KVVAALIVLLLVVDQVIKIWV, FLSLFRIVAMGFCIYLLAKLV, and SLIIAGGIGNIIDSIFYGVIF. Active-site residues include D150 and D184. A helical transmembrane segment spans residues 173–193; it reads FVFFHPVFNFADSCISIGLIL.

It belongs to the peptidase A8 family.

The protein localises to the cell inner membrane. It catalyses the reaction Release of signal peptides from bacterial membrane prolipoproteins. Hydrolyzes -Xaa-Yaa-Zaa-|-(S,diacylglyceryl)Cys-, in which Xaa is hydrophobic (preferably Leu), and Yaa (Ala or Ser) and Zaa (Gly or Ala) have small, neutral side chains.. The protein operates within protein modification; lipoprotein biosynthesis (signal peptide cleavage). In terms of biological role, this protein specifically catalyzes the removal of signal peptides from prolipoproteins. The sequence is that of Lipoprotein signal peptidase from Porphyromonas gingivalis (strain ATCC 33277 / DSM 20709 / CIP 103683 / JCM 12257 / NCTC 11834 / 2561).